The chain runs to 622 residues: MSNKDELYTFGIGENFHLQNYLGVHSENGSFCFRVWAPNAENVQVIGDFTDWRNRPLQMNKNQAGVWEANSLDAREGDLYKYLVTRKGGQVVEKIDPMAVYMERRPGTASVIKVLRNKKWEDGLWMGRRKRLGFQKRPINIYEVHAGSWKKDDFGHPMTFSQLKDYLIPYLVEMNYTHVEFMPLMAHPLDMSWGYQLMGYFAFEHTYGTPEEFQDFVEACHKNNIGVLVDWVPGHFIQNDDALAYFDGTATYEYQNHDRAHNYRWGALNFDLGKNQVQSFLISSALFWIEHYHIDGIRVDAVSNMLYLDYDEGPWEANQFGDNRNLEGYHFLRKLNKVIKERHPNVMMIAEESTASTPITKDLESGGLGFDFKWNMGWMNDILRFYEEDPLYRQYDFNLVTFSFMYIFNENFVLAFSHDEVVHGKKSMMHKMWGDRYNQFAGLRNLYAYQMCHPGKKLLFMGSEFGQFLEWKYNDQLEWENLNDDMNQKMQRYTKQLNQFYKDHKCLWRIDDSFDGLEIIDADNKSETVLSFIRKDDKGDLLLCVFNMTPVERPNFTIGVPQAGIYEEVLNTEMEEFGGVWKNHNPVTKTQVATWKDYDHTLSFTLPALGASVWRIKRRLRK.

Asp-300 functions as the Nucleophile in the catalytic mechanism. Residue Glu-351 is the Proton donor of the active site.

The protein belongs to the glycosyl hydrolase 13 family. GlgB subfamily. In terms of assembly, monomer.

The enzyme catalyses Transfers a segment of a (1-&gt;4)-alpha-D-glucan chain to a primary hydroxy group in a similar glucan chain.. It functions in the pathway glycan biosynthesis; glycogen biosynthesis. Catalyzes the formation of the alpha-1,6-glucosidic linkages in glycogen by scission of a 1,4-alpha-linked oligosaccharide from growing alpha-1,4-glucan chains and the subsequent attachment of the oligosaccharide to the alpha-1,6 position. This is 1,4-alpha-glucan branching enzyme GlgB from Streptococcus agalactiae serotype V (strain ATCC BAA-611 / 2603 V/R).